Here is a 143-residue protein sequence, read N- to C-terminus: Putative pre-16S rRNA nuclease (143 aa).

It belongs to the YqgF nuclease family.

The protein localises to the cytoplasm. Functionally, could be a nuclease involved in processing of the 5'-end of pre-16S rRNA. In Lactobacillus gasseri (strain ATCC 33323 / DSM 20243 / BCRC 14619 / CIP 102991 / JCM 1131 / KCTC 3163 / NCIMB 11718 / NCTC 13722 / AM63), this protein is Putative pre-16S rRNA nuclease.